Consider the following 256-residue polypeptide: uncharacterized protein (256 aa).

A disordered region spans residues 211 to 256 (RKLQASVTTTPPKRCKLADRPAQTTQDTPRAPQPAPVRAQRPLFTL). A compositionally biased stretch (low complexity) spans 246 to 256 (PVRAQRPLFTL).

This is an uncharacterized protein from Orgyia pseudotsugata (Douglas-fir tussock moth).